The sequence spans 359 residues: Peptide chain release factor 1 (359 aa).

Residue glutamine 236 is modified to N5-methylglutamine.

It belongs to the prokaryotic/mitochondrial release factor family. In terms of processing, methylated by PrmC. Methylation increases the termination efficiency of RF1.

It is found in the cytoplasm. In terms of biological role, peptide chain release factor 1 directs the termination of translation in response to the peptide chain termination codons UAG and UAA. In Streptococcus agalactiae serotype Ia (strain ATCC 27591 / A909 / CDC SS700), this protein is Peptide chain release factor 1.